Consider the following 63-residue polypeptide: Jingdongin-1 (63 aa).

Positions 1-22 (MLTLKKSMLLLFFLGTINLSLC) are cleaved as a signal peptide. Residues 23 to 44 (EQERDADEEERRDDDEMDVEVE) constitute a propeptide that is removed on maturation. Cysteines 57 and 63 form a disulfide.

As to expression, expressed by the skin glands.

It is found in the secreted. The synthetic peptide has antimicrobial activity against Gram-negative bacterium B.dysenteriae (MIC=35 ug/ml), against Gram-positive bacteria S.aureus ATCC 2592 (MIC=4.7 ug/ml) and B.subtilis ATCC 6633 (MIC=9.38 ug/ml) and against fungus C.albicans (MIC=18.75 ug/ml). Has no activity against Gram-negative bacterium E.coli ATCC 25922 but exhibits low hemolytic activity at concentrations up to 200 ug/ml. This chain is Jingdongin-1, found in Amolops jingdongensis (Chinese torrent frog).